The sequence spans 157 residues: Crossover junction endodeoxyribonuclease RuvC (157 aa).

Residues D7, E66, and D139 contribute to the active site. The Mg(2+) site is built by D7, E66, and D139.

It belongs to the RuvC family. As to quaternary structure, homodimer which binds Holliday junction (HJ) DNA. The HJ becomes 2-fold symmetrical on binding to RuvC with unstacked arms; it has a different conformation from HJ DNA in complex with RuvA. In the full resolvosome a probable DNA-RuvA(4)-RuvB(12)-RuvC(2) complex forms which resolves the HJ. Requires Mg(2+) as cofactor.

It is found in the cytoplasm. It carries out the reaction Endonucleolytic cleavage at a junction such as a reciprocal single-stranded crossover between two homologous DNA duplexes (Holliday junction).. Its function is as follows. The RuvA-RuvB-RuvC complex processes Holliday junction (HJ) DNA during genetic recombination and DNA repair. Endonuclease that resolves HJ intermediates. Cleaves cruciform DNA by making single-stranded nicks across the HJ at symmetrical positions within the homologous arms, yielding a 5'-phosphate and a 3'-hydroxyl group; requires a central core of homology in the junction. The consensus cleavage sequence is 5'-(A/T)TT(C/G)-3'. Cleavage occurs on the 3'-side of the TT dinucleotide at the point of strand exchange. HJ branch migration catalyzed by RuvA-RuvB allows RuvC to scan DNA until it finds its consensus sequence, where it cleaves and resolves the cruciform DNA. This Helicobacter pylori (strain Shi470) protein is Crossover junction endodeoxyribonuclease RuvC.